A 185-amino-acid chain; its full sequence is Pyruvate/ketoisovalerate oxidoreductases common subunit gamma (185 aa).

As to quaternary structure, heterotetramer of one alpha, one beta, one delta and one gamma chain.

The catalysed reaction is 2 oxidized [2Fe-2S]-[ferredoxin] + pyruvate + CoA = 2 reduced [2Fe-2S]-[ferredoxin] + acetyl-CoA + CO2 + H(+). The enzyme catalyses 3-methyl-2-oxobutanoate + 2 oxidized [2Fe-2S]-[ferredoxin] + CoA = 2-methylpropanoyl-CoA + 2 reduced [2Fe-2S]-[ferredoxin] + CO2 + H(+). This Pyrococcus furiosus (strain ATCC 43587 / DSM 3638 / JCM 8422 / Vc1) protein is Pyruvate/ketoisovalerate oxidoreductases common subunit gamma (porG).